A 380-amino-acid chain; its full sequence is GPI-anchor transamidase (380 aa).

An N-terminal signal peptide occupies residues 1–19; the sequence is MIVQFVALLLLNLLQIIAA. The Lumenal segment spans residues 20 to 354; that stretch reads ESSHTNNWAV…TRELKYKKHP (335 aa). Catalysis depends on residues H145 and C187. N-linked (GlcNAc...) asparagine glycosylation occurs at N307. A helical transmembrane segment spans residues 355–375; sequence ISRIISAVVCISFSIGFPYYA. Residues 376–380 are Cytoplasmic-facing; sequence SKYLK.

It belongs to the peptidase C13 family. Forms a complex with PIG-T homolog, PIG-U homolog and PIG-S homolog. The disulfide bond between PIGK/GPI8 and PIGT is important for normal enzyme activity.

Its subcellular location is the endoplasmic reticulum membrane. Its pathway is glycolipid biosynthesis; glycosylphosphatidylinositol-anchor biosynthesis. Its function is as follows. Mediates GPI anchoring in the endoplasmic reticulum, by replacing a protein's C-terminal GPI attachment signal peptide with a pre-assembled GPI. During this transamidation reaction, the GPI transamidase forms a carbonyl intermediate with the substrate protein. This Schizosaccharomyces pombe (strain 972 / ATCC 24843) (Fission yeast) protein is GPI-anchor transamidase (gpi8).